Reading from the N-terminus, the 428-residue chain is Acetyltransferase sirH (428 aa).

N8 is a glycosylation site (N-linked (GlcNAc...) asparagine). 6 consecutive transmembrane segments (helical) span residues 33–53 (LLTPIFMAVAVLTTLPPPGPL), 55–75 (VIVGLTAFTSLWLHVLTHWVS), 78–98 (AFFMDAIFMISITVRWLLMFV), 305–325 (LYVGFLVSGVQHYACALLIPS), 329–349 (GWGMFWQMPAYAAVVTVEDIL), and 366–386 (FLGYIWTAYWMTLIYALPVGF).

Belongs to the wax synthase family.

The protein resides in the membrane. It functions in the pathway polyketide biosynthesis. Its function is as follows. Acetyltransferase; part of the gene cluster that mediates the biosynthesis of asperlin, a polyketide showing anti-inflammatory, antitumor and antibiotic activities. The first step of the asperlin biosynthesis is the production of the intermediate 2,4,6-octatrienoic acid by the highly redusing polyketide synthase alnA with cleavage of the PKS product by the esterase alnB. 2,4,6-octatrienoic acid is further converted to asperlin via several steps involving the remaining enzymes from the cluster. This is Acetyltransferase sirH from Emericella nidulans (strain FGSC A4 / ATCC 38163 / CBS 112.46 / NRRL 194 / M139) (Aspergillus nidulans).